Here is a 291-residue protein sequence, read N- to C-terminus: MEMO1 family protein PH1626 (291 aa).

The protein belongs to the MEMO1 family.

The sequence is that of MEMO1 family protein PH1626 from Pyrococcus horikoshii (strain ATCC 700860 / DSM 12428 / JCM 9974 / NBRC 100139 / OT-3).